An 882-amino-acid polypeptide reads, in one-letter code: Alanine--tRNA ligase (882 aa).

Residues His570, His574, Cys672, and His676 each coordinate Zn(2+).

This sequence belongs to the class-II aminoacyl-tRNA synthetase family. Requires Zn(2+) as cofactor.

The protein resides in the cytoplasm. The enzyme catalyses tRNA(Ala) + L-alanine + ATP = L-alanyl-tRNA(Ala) + AMP + diphosphate. In terms of biological role, catalyzes the attachment of alanine to tRNA(Ala) in a two-step reaction: alanine is first activated by ATP to form Ala-AMP and then transferred to the acceptor end of tRNA(Ala). Also edits incorrectly charged Ser-tRNA(Ala) and Gly-tRNA(Ala) via its editing domain. This chain is Alanine--tRNA ligase, found in Xanthomonas axonopodis pv. citri (strain 306).